The following is a 493-amino-acid chain: MAANFQLPLQCLQYLEKRGAESQRFLIASSGGKIYSYAAETGQRLSSWPQDVDASNANNSKATETETGSEDQAPPEKKRKVSPSEEGPAETSKSTVKASTWSSIPCLVAHSNGDYVIALTAEDKCVRVLRLKDDGTLEQLSERCMPKRPCSIALTDDGNTILCGDKFGDVYSLPLLPGNEPYVAPKLPNRPKVPSATPLTVHSKRNLESLEQQLRYSQKNSTEEKNSLNFQHQLLLGHVSLLTDVAFVTVPQDDNFGKKRSYILTGDRDEHIRVSRYPQAHIIEGYCLGHTAFVTKLCIPQYAPGYLISGGGDDYLLVWKWSEGRILQKVPLVKQESETTQVTVRGIWATSIGGSNIVLVALEGSSNLQCFVLGSDGTLKPQDPIEMSGNVLDVAIMEKDSTIVVSVDCIREKGSTHEWRASPTSPSNLIESFRVKPGTENLEWEPVTESLVTNINMGGSSGIPADADTKQRKELNDVLYSLGNLRKKHGEDD.

A compositionally biased stretch (polar residues) spans 46-66; it reads SSWPQDVDASNANNSKATETE. A disordered region spans residues 46–96; that stretch reads SSWPQDVDASNANNSKATETETGSEDQAPPEKKRKVSPSEEGPAETSKSTV. WD repeat units lie at residues 99 to 139, 237 to 287, and 289 to 331; these read STWS…TLEQ, GHVS…EGYC, and GHTA…QKVP.

The protein belongs to the WD repeat TRM82 family. Forms a heterodimer with the catalytic subunit trm8.

The protein localises to the nucleus. It functions in the pathway tRNA modification; N(7)-methylguanine-tRNA biosynthesis. Required for the formation of N(7)-methylguanine at position 46 (m7G46) in tRNA. In the complex, it is required to stabilize and induce conformational changes of the catalytic subunit. The sequence is that of tRNA (guanine-N(7)-)-methyltransferase non-catalytic subunit trm82 (trm82) from Aspergillus oryzae (strain ATCC 42149 / RIB 40) (Yellow koji mold).